A 67-amino-acid polypeptide reads, in one-letter code: DNA-directed RNA polymerase subunit omega (67 aa).

It belongs to the RNA polymerase subunit omega family. In terms of assembly, the RNAP catalytic core consists of 2 alpha, 1 beta, 1 beta' and 1 omega subunit. When a sigma factor is associated with the core the holoenzyme is formed, which can initiate transcription.

The enzyme catalyses RNA(n) + a ribonucleoside 5'-triphosphate = RNA(n+1) + diphosphate. Its function is as follows. Promotes RNA polymerase assembly. Latches the N- and C-terminal regions of the beta' subunit thereby facilitating its interaction with the beta and alpha subunits. This is DNA-directed RNA polymerase subunit omega from Bordetella pertussis (strain Tohama I / ATCC BAA-589 / NCTC 13251).